The sequence spans 296 residues: Myeloid differentiation primary response protein MyD88 (296 aa).

The Death domain occupies 54–109 (MGFEYLEIRELETRPDPTRSLLDAWQGRSGASVGRLLELLALLDREDILKELKSRI). Positions 110-155 (EEDCQKYLGKQQNQESEKPLQVARVESSVPQTKELGGITTLDDPLG) are intermediate domain. A TIR domain is found at 159-293 (ELFDAFICYC…WFWTRLAKAL (135 aa)). A Phosphoserine modification is found at Ser-244.

As to quaternary structure, homodimer. Also forms heterodimers with TIRAP. Binds to TLR2, TLR4, IRAK1, IRAK2 and IRAK4 via their respective TIR domains. Interacts with IL18R1. Interacts with BMX, IL1RL1, IKBKE and IRF7. Interacts with LRRFIP1 and LRRFIP2; this interaction positively regulates Toll-like receptor (TLR) signaling in response to agonist. Interacts with FLII. LRRFIP1 and LRRFIP2 compete with FLII for MYD88-binding. Interacts with IRF1. Upon IL1B treatment, forms a complex with PELI1, IRAK1, IRAK4 and TRAF6; this complex recruits MAP3K7/TAK1, TAB1 and TAB2 to mediate NF-kappa-B activation. Direct binding of SMAD6 to PELI1 prevents the complex formation and hence negatively regulates IL1R-TLR signaling and eventually NF-kappa-B-mediated gene expression. May interact with PIK3AP1. Interacts (via TIR domain) with DHX9 (via H2A and OB-fold regions); this interaction is direct. Interacts with OTUD4 deubiquitinase; the interaction is direct. In terms of processing, ubiquitinated; undergoes 'Lys-63'-linked polyubiquitination. OTUD4 specifically hydrolyzes 'Lys-63'-linked polyubiquitinated MYD88. Deubiquitinated by USP3 that cleaves 'Lys-63'-linked ubiquitin chains leading to inhibition of MYD88-induced NF-kappa-B signaling. Detected in bone marrow. Isoform 1 is expressed in testis, kidney, lung, ovary, adrenal gland, provstate, thymus and heart, and weakly in skeletal muscle, liver, spleen and brain. Isoform 2 is mainly expressed in the spleen and weakly in brain.

It localises to the cytoplasm. It is found in the nucleus. In terms of biological role, adapter protein involved in the Toll-like receptor and IL-1 receptor signaling pathway in the innate immune response. Acts via IRAK1, IRAK2, IRF7 and TRAF6, leading to NF-kappa-B activation, cytokine secretion and the inflammatory response. Increases IL-8 transcription. Involved in IL-18-mediated signaling pathway. Activates IRF1 resulting in its rapid migration into the nucleus to mediate an efficient induction of IFN-beta, NOS2/INOS, and IL12A genes. Upon TLR8 activation by GU-rich single-stranded RNA (GU-rich RNA) derived from viruses, induces IL1B release through NLRP3 inflammasome activation. MyD88-mediated signaling in intestinal epithelial cells is crucial for maintenance of gut homeostasis and controls the expression of the antimicrobial lectin REG3G in the small intestine. Mediates leukocyte recruitment at the inflammatory site. Functionally, defective in its ability to induce IRAK phosphorylation and NF-kappa-B activation and can function as a negative regulator of activation by IL-1 or lipopolysaccharide (LPS). The chain is Myeloid differentiation primary response protein MyD88 from Mus musculus (Mouse).